The sequence spans 238 residues: tRNA1(Val) (adenine(37)-N6)-methyltransferase (238 aa).

The protein belongs to the methyltransferase superfamily. tRNA (adenine-N(6)-)-methyltransferase family.

It is found in the cytoplasm. The catalysed reaction is adenosine(37) in tRNA1(Val) + S-adenosyl-L-methionine = N(6)-methyladenosine(37) in tRNA1(Val) + S-adenosyl-L-homocysteine + H(+). Functionally, specifically methylates the adenine in position 37 of tRNA(1)(Val) (anticodon cmo5UAC). This chain is tRNA1(Val) (adenine(37)-N6)-methyltransferase, found in Shewanella putrefaciens (strain CN-32 / ATCC BAA-453).